Consider the following 475-residue polypeptide: tRNA-2-methylthio-N(6)-dimethylallyladenosine synthase (475 aa).

The interval 1-20 is disordered; the sequence is MEQNLTTERSETSSSRAGTA. Residues 25–145 form the MTTase N-terminal domain; that stretch reads KKVFVKTYGC…LPSVVTRARA (121 aa). [4Fe-4S] cluster-binding residues include C34, C70, C108, C186, C190, and C193. Residues 172 to 404 enclose the Radical SAM core domain; sequence RSRGVTAFLT…QALLAEQQRA (233 aa). The TRAM domain maps to 407-469; it reads ESLVGTEIDL…GHSLFCEPAG (63 aa).

Belongs to the methylthiotransferase family. MiaB subfamily. Monomer. The cofactor is [4Fe-4S] cluster.

It localises to the cytoplasm. It catalyses the reaction N(6)-dimethylallyladenosine(37) in tRNA + (sulfur carrier)-SH + AH2 + 2 S-adenosyl-L-methionine = 2-methylsulfanyl-N(6)-dimethylallyladenosine(37) in tRNA + (sulfur carrier)-H + 5'-deoxyadenosine + L-methionine + A + S-adenosyl-L-homocysteine + 2 H(+). Catalyzes the methylthiolation of N6-(dimethylallyl)adenosine (i(6)A), leading to the formation of 2-methylthio-N6-(dimethylallyl)adenosine (ms(2)i(6)A) at position 37 in tRNAs that read codons beginning with uridine. This chain is tRNA-2-methylthio-N(6)-dimethylallyladenosine synthase, found in Chelativorans sp. (strain BNC1).